Here is a 541-residue protein sequence, read N- to C-terminus: Atlastin-3 (541 aa).

Positions 1-25 are N-terminal hypervariable region (HVR); the sequence is MLSPQRVAAAASRGADDAMESSKPG. The Cytoplasmic portion of the chain corresponds to 1 to 445; it reads MLSPQRVAAA…NVFSTFRTPA (445 aa). The GB1/RHD3-type G domain maps to 57-305; that stretch reads DLDVVVVSVA…LIPYVLNPSK (249 aa). GDP contacts are provided by Arg-70, Lys-71, Gly-72, Lys-73, Ser-74, Phe-75, and Arg-109. Position 142 (Asp-142) interacts with Mg(2+). Arg-213, Asp-214, Val-272, and Ser-275 together coordinate GDP. The interval 343–434 is 3HB (three-helix bundle) domain; sequence MLQATAEANN…YENFCKHNGS (92 aa). Position 391 is an N6-acetyllysine (Lys-391). The helical transmembrane segment at 446 to 466 threads the bilayer; the sequence is VLFTGIVALYIASGLTGFIGL. Position 467 (Glu-467) is a topological domain, lumenal. The helical transmembrane segment at 468–488 threads the bilayer; it reads VVAQLFNCMVGLLLIALLTWG. Topologically, residues 489–541 are cytoplasmic; that stretch reads YIRYSGQYRELGGAIDFGAAYVLEQASSHIGNSTQATVRDAVVGRPSMDKKAQ. Residue Ser-535 is modified to Phosphoserine.

Belongs to the TRAFAC class dynamin-like GTPase superfamily. GB1/RHD3 GTPase family. GB1 subfamily. In terms of assembly, monomeric and homodimeric. The homodimer, transiently formed by two molecules on opposing membranes, is the active form mediating ER membrane fusion. Interacts with ZFYVE27; both proteins are involved in endoplasmic reticulum tubular network organization. Interacts with REEP5; both proteins are involved in endoplasmic reticulum tubular network organization. As to expression, expressed in the central nervous system and in dorsal root ganglia neurons. Expressed in peripheral tissues (at protein level).

It is found in the endoplasmic reticulum membrane. It catalyses the reaction GTP + H2O = GDP + phosphate + H(+). Atlastin-3 (ATL3) is a membrane-anchored GTPase that mediates the GTP-dependent fusion of endoplasmic reticulum (ER) membranes, maintaining the continuous ER network. It facilitates the formation of three-way junctions where ER tubules intersect. Two atlastin-3 on neighboring ER tubules bind GTP and form loose homodimers through the GB1/RHD3-type G domains and 3HB regions. Upon GTP hydrolysis, the 3HB regions tighten, pulling the membranes together to drive their fusion. After fusion, the homodimer disassembles upon release of inorganic phosphate (Pi). Subsequently, GDP dissociates, resetting the monomers to a conformation ready for a new fusion cycle. The protein is Atlastin-3 of Homo sapiens (Human).